A 112-amino-acid polypeptide reads, in one-letter code: ATP synthase epsilon chain (112 aa).

The protein belongs to the ATPase epsilon chain family. F-type ATPases have 2 components, CF(1) - the catalytic core - and CF(0) - the membrane proton channel. CF(1) has five subunits: alpha(3), beta(3), gamma(1), delta(1), epsilon(1). CF(0) has three main subunits: a, b and c.

It localises to the cell inner membrane. In terms of biological role, produces ATP from ADP in the presence of a proton gradient across the membrane. This chain is ATP synthase epsilon chain (atpC), found in Rickettsia prowazekii (strain Madrid E).